The primary structure comprises 160 residues: Ribosome maturation factor RimP (160 aa).

The protein belongs to the RimP family.

The protein localises to the cytoplasm. Required for maturation of 30S ribosomal subunits. In Syntrophus aciditrophicus (strain SB), this protein is Ribosome maturation factor RimP.